A 204-amino-acid chain; its full sequence is Large ribosomal subunit protein uL4 (204 aa).

Positions 44–76 (KRQGTQSAKTRSEVRGGGIKPWRQKGTGRARQG) are disordered.

The protein belongs to the universal ribosomal protein uL4 family. In terms of assembly, part of the 50S ribosomal subunit.

Functionally, one of the primary rRNA binding proteins, this protein initially binds near the 5'-end of the 23S rRNA. It is important during the early stages of 50S assembly. It makes multiple contacts with different domains of the 23S rRNA in the assembled 50S subunit and ribosome. Its function is as follows. Forms part of the polypeptide exit tunnel. This is Large ribosomal subunit protein uL4 from Clostridium perfringens (strain 13 / Type A).